We begin with the raw amino-acid sequence, 392 residues long: Pannexin-3 (392 aa).

Over 1-39 the chain is Cytoplasmic; sequence MSLAHTAAEYMLSDALLPDRRGPRLKGLRLELPLDRIVK. Residues 40–60 form a helical membrane-spanning segment; sequence FVAVGSPLLLMSLAFAQEFSS. The Extracellular segment spans residues 61 to 113; that stretch reads GSPISCFSPSNFSIRQAAYVDSSCWDSLLHHKQDGPGQDKMKSLWPHKALPYS. An N-linked (GlcNAc...) asparagine glycan is attached at Asn71. A helical transmembrane segment spans residues 114–134; the sequence is LLALALLMYLPVLLWQYAAVP. Residues 135-215 lie on the Cytoplasmic side of the membrane; the sequence is ALSSDLLFII…VATYLLRNSL (81 aa). Residues 216–236 form a helical membrane-spanning segment; that stretch reads LLIFTSATYLYLGHFHLDVFF. The Extracellular segment spans residues 237–267; that stretch reads QEEFSCSIKTGLLSDETHVPNLITCRLTSLS. The helical transmembrane segment at 268 to 288 threads the bilayer; sequence IFQIVSLSSVAIYTILVPVII. Over 289 to 392 the chain is Cytoplasmic; the sequence is YNLTRLCRWD…LTNSACDEHP (104 aa).

Belongs to the pannexin family. As to quaternary structure, homoheptameric.

Its subcellular location is the cell membrane. The protein localises to the cell junction. The protein resides in the gap junction. It localises to the endoplasmic reticulum membrane. The enzyme catalyses Ca(2+)(in) = Ca(2+)(out). It carries out the reaction ATP(in) = ATP(out). In terms of biological role, regulator of osteoblast differentiation by functionning as a Ca(2+) channel in the endoplasmic reticulum which regulates calmodulin (CaM) pathways. Allows ATP release into the extracellular space and activation or purinergic receptors. In Homo sapiens (Human), this protein is Pannexin-3.